A 648-amino-acid polypeptide reads, in one-letter code: Probable ATP-dependent RNA helicase DDX43 (648 aa).

The segment at 1 to 60 (MSHHGGAPKASTWVVASRRSSTVSRAPERRPAEELNRTGPEGYSVGRGGRWRGTSRPPEA) is disordered. The span at 10–25 (ASTWVVASRRSSTVSR) shows a compositional bias: low complexity. Residues 26-36 (APERRPAEELN) show a composition bias toward basic and acidic residues. One can recognise a KH domain in the interval 67-128 (ELPLCFALKS…AMQTKAKAVI (62 aa)). The Q motif motif lies at 242–270 (TFDDAFQCYPEVMENIKKAGFQKPTPIQS). One can recognise a Helicase ATP-binding domain in the interval 273–448 (WPIVLQGIDL…QSYLKEPMIV (176 aa)). Residue 286-293 (AQTGTGKT) coordinates ATP. The DEAD box motif lies at 396–399 (DEAD). A Helicase C-terminal domain is found at 460-621 (SVKQNIIVTT…SIPEELVSMA (162 aa)). A compositionally biased stretch (basic and acidic residues) spans 628-641 (QQKREMERKMERPQ). Residues 628-648 (QQKREMERKMERPQGRPKKFH) are disordered.

This sequence belongs to the DEAD box helicase family. Expressed in testis. Expressed in many tumors of various histological types at a level that is 100-fold higher than the level observed in normal tissues except testis.

The catalysed reaction is ATP + H2O = ADP + phosphate + H(+). The polypeptide is Probable ATP-dependent RNA helicase DDX43 (DDX43) (Homo sapiens (Human)).